The following is a 331-amino-acid chain: Hydroxyacylglutathione hydrolase 1, mitochondrial (331 aa).

The N-terminal 76 residues, 1–76, are a transit peptide targeting the mitochondrion; it reads MPVISKASST…HFCSISNMPS (76 aa). 2 residues coordinate Zn(2+): H131 and H133. The Fe cation site is built by D135 and H136. H189 and D208 together coordinate Zn(2+). D208 is a binding site for Fe cation. 246–248 is a binding site for substrate; sequence REN.

The protein belongs to the metallo-beta-lactamase superfamily. Glyoxalase II family. Fe(2+) is required as a cofactor. It depends on Fe(3+) as a cofactor. Requires Zn(2+) as cofactor. Mainly expressed in roots, flowers and flower buds. Also detected in leaves.

Its subcellular location is the mitochondrion. The enzyme catalyses an S-(2-hydroxyacyl)glutathione + H2O = a 2-hydroxy carboxylate + glutathione + H(+). It functions in the pathway secondary metabolite metabolism; methylglyoxal degradation; (R)-lactate from methylglyoxal: step 2/2. In terms of biological role, thiolesterase that catalyzes the hydrolysis of S-D-lactoyl-glutathione to form glutathione and D-lactic acid. This Arabidopsis thaliana (Mouse-ear cress) protein is Hydroxyacylglutathione hydrolase 1, mitochondrial (GLX2-1).